We begin with the raw amino-acid sequence, 847 residues long: B-cell receptor CD22 (847 aa).

A signal peptide spans 1-19; it reads MHLLGPWLLLLVLEYLAFS. The 119-residue stretch at 20-138 folds into the Ig-like V-type domain; it reads DSSKWAFEHP…MERIHLNVSE (119 aa). The Extracellular segment spans residues 20–687; it reads DSSKWAFEHP…YYSPETIGRR (668 aa). Residues asparagine 67, asparagine 101, and asparagine 112 are each glycosylated (N-linked (GlcNAc...) asparagine). An N-acetylneuraminate-binding site is contributed by arginine 120. Asparagine 135, asparagine 164, and asparagine 231 each carry an N-linked (GlcNAc...) asparagine glycan. Ig-like C2-type domains are found at residues 143–235, 242–326, 331–416, 419–500, 505–582, and 593–676; these read PHIQ…DTVQ, PKLE…VFLQ, PEPS…LDVQ, PKKV…VALN, PRDV…QTAS, and PRRL…STLT. A disulfide bond links cysteine 161 and cysteine 219. Cystine bridges form between cysteine 265/cysteine 309 and cysteine 353/cysteine 396. N-linked (GlcNAc...) asparagine glycosylation is found at asparagine 363, asparagine 428, asparagine 445, asparagine 448, and asparagine 479. 2 disulfide bridges follow: cysteine 442-cysteine 484 and cysteine 529-cysteine 571. N-linked (GlcNAc...) asparagine glycosylation is found at asparagine 574 and asparagine 634. The cysteines at positions 616 and 659 are disulfide-linked. A helical membrane pass occupies residues 688-708; it reads VAVGFGSCLAILILAICGLKL. Residues 709 to 847 are Cytoplasmic-facing; it reads QRRWKRTQSQ…ENVDYVILKH (139 aa). 3 positions are modified to phosphoserine: serine 725, serine 726, and serine 729. 2 short sequence motifs (ITIM motif) span residues 760–765 and 794–799; these read ISYTTL and VTYSVL. Tyrosine 762 carries the post-translational modification Phosphotyrosine. A phosphotyrosine mark is found at tyrosine 807, tyrosine 822, and tyrosine 842. 2 short sequence motifs (ITIM motif) span residues 820–825 and 840–845; these read IHYSEL and VDYVIL.

Belongs to the immunoglobulin superfamily. SIGLEC (sialic acid binding Ig-like lectin) family. Predominantly monomer of isoform CD22-beta. Also found as heterodimer of isoform CD22-beta and a shorter isoform. Interacts with PTPN6/SHP-1, LYN, SYK, PIK3R1/PIK3R2 and PLCG1 upon phosphorylation. Interacts with GRB2, INPP5D and SHC1 upon phosphorylation. May form a complex with INPP5D/SHIP, GRB2 and SHC1. In terms of processing, phosphorylation of Tyr-762, Tyr-807 and Tyr-822 are involved in binding to SYK, GRB2 and SYK, respectively. Phosphorylation of Tyr-842 is involved in binding to SYK, PLCG2 and PIK3R1/PIK3R2. Phosphorylated on tyrosine residues by LYN.

It localises to the cell membrane. Most highly expressed siglec (sialic acid-binding immunoglobulin-like lectin) on B-cells that plays a role in various aspects of B-cell biology including differentiation, antigen presentation, and trafficking to bone marrow. Binds to alpha 2,6-linked sialic acid residues of surface molecules such as CD22 itself, CD45 and IgM in a cis configuration. Can also bind to ligands on other cells as an adhesion molecule in a trans configuration. Acts as an inhibitory coreceptor on the surface of B-cells and inhibits B-cell receptor induced signaling, characterized by inhibition of the calcium mobilization and cellular activation. Mechanistically, the immunoreceptor tyrosine-based inhibitory motif domain is phosphorylated by the Src kinase LYN, which in turn leads to the recruitment of the protein tyrosine phosphatase 1/PTPN6, leading to the negative regulation of BCR signaling. If this negative signaling from is of sufficient strength, apoptosis of the B-cell can be induced. This chain is B-cell receptor CD22, found in Pan paniscus (Pygmy chimpanzee).